A 279-amino-acid polypeptide reads, in one-letter code: 5'-nucleotidase SurE 1 (279 aa).

Residues Asp12, Asp13, Ser45, and Asn103 each contribute to the a divalent metal cation site.

The protein belongs to the SurE nucleotidase family. A divalent metal cation is required as a cofactor.

The protein localises to the cytoplasm. The catalysed reaction is a ribonucleoside 5'-phosphate + H2O = a ribonucleoside + phosphate. Functionally, nucleotidase that shows phosphatase activity on nucleoside 5'-monophosphates. In Chlamydia caviae (strain ATCC VR-813 / DSM 19441 / 03DC25 / GPIC) (Chlamydophila caviae), this protein is 5'-nucleotidase SurE 1.